We begin with the raw amino-acid sequence, 302 residues long: F-box protein At1g20360 (302 aa).

The F-box domain occupies 1-48 (MNSLPLHLLDQILFRLEPKSLAMMKSTNRTINSHISDPLFESEYFSRL).

The sequence is that of F-box protein At1g20360 from Arabidopsis thaliana (Mouse-ear cress).